The chain runs to 249 residues: Cilia- and flagella-associated protein 410 (249 aa).

LRR repeat units follow at residues 19–40, 41–62, and 63–84; these read NVRK…REMP, SLEV…RSCR, and RLSE…FYLK. An LRRCT domain is found at 97 to 137; the sequence is NPCCGTSPHLYRMTVLRNLPHLQKLDNQAVTEEELTRALME. A disordered region spans residues 146 to 203; it reads HREGAGNGCPKPPYALNSVSSATETSQHLLSYTEETEVQGQTTTDQSPSFSPRDTMRS. Positions 162-175 are enriched in polar residues; that stretch reads NSVSSATETSQHLL.

As to quaternary structure, found in a complex with CFAP410, NEK1 and SPATA7. Interacts with NEK1. In terms of tissue distribution, expressed in the retina.

The protein resides in the cell projection. It is found in the cilium. The protein localises to the cytoplasm. Its subcellular location is the cytoskeleton. It localises to the cilium basal body. The protein resides in the mitochondrion. It is found in the photoreceptor outer segment. In terms of biological role, plays a role in cilia formation and/or maintenance. Plays a role in the regulation of cell morphology and cytoskeletal organization. Involved in DNA damage repair. This is Cilia- and flagella-associated protein 410 from Mus musculus (Mouse).